Consider the following 622-residue polypeptide: Mitochondrial distribution and morphology protein 34 (622 aa).

Residues 1 to 204 form the SMP-LTD domain; sequence MSFKVNWNSL…LPTLIHQLSL (204 aa). Disordered regions lie at residues 362-399 and 568-592; these read YSNKDAPTKPKRRRIKVHKKNKSKHDETTTTTSKPSEL and FDGGKNNNTNDNNSKNFRPGFTRNE. Residues 370–384 show a composition bias toward basic residues; sequence KPKRRRIKVHKKNKS. Residues 390 to 399 show a composition bias toward polar residues; it reads TTTTSKPSEL. A compositionally biased stretch (low complexity) spans 571 to 583; the sequence is GKNNNTNDNNSKN.

This sequence belongs to the MDM34 family. In terms of assembly, component of the ER-mitochondria encounter structure (ERMES) or MDM complex, composed of MMM1, MDM10, MDM12 and MDM34.

The protein resides in the mitochondrion outer membrane. Component of the ERMES/MDM complex, which serves as a molecular tether to connect the endoplasmic reticulum (ER) and mitochondria. Components of this complex are involved in the control of mitochondrial shape and protein biogenesis, and function in nonvesicular lipid trafficking between the ER and mitochondria. MDM34 is required for the interaction of the ER-resident membrane protein MMM1 and the outer mitochondrial membrane-resident beta-barrel protein MDM10. This chain is Mitochondrial distribution and morphology protein 34, found in Candida dubliniensis (strain CD36 / ATCC MYA-646 / CBS 7987 / NCPF 3949 / NRRL Y-17841) (Yeast).